A 340-amino-acid chain; its full sequence is Protein-arginine kinase (340 aa).

A Phosphagen kinase C-terminal domain is found at 21 to 242 (VVLSSRIRLA…EQIIMQERVA (222 aa)). ATP is bound by residues 24–28 (SSRIR), His79, Arg113, 164–168 (RASVM), and 195–200 (RGIYGE).

Belongs to the ATP:guanido phosphotransferase family.

It carries out the reaction L-arginyl-[protein] + ATP = N(omega)-phospho-L-arginyl-[protein] + ADP + H(+). Catalyzes the specific phosphorylation of arginine residues in proteins. This chain is Protein-arginine kinase, found in Listeria monocytogenes serotype 4b (strain F2365).